A 367-amino-acid polypeptide reads, in one-letter code: Alginate lyase (367 aa).

A signal peptide spans 1 to 24 (MTIFKRISSPALLALALFGGAAHA). Substrate-binding positions include 63–64 (SK), 136–137 (HT), and tyrosine 254.

The protein belongs to the polysaccharide lyase 5 family.

The protein localises to the periplasm. The catalysed reaction is Eliminative cleavage of alginate to give oligosaccharides with 4-deoxy-alpha-L-erythro-hex-4-enuronosyl groups at their non-reducing ends and beta-D-mannuronate at their reducing end.. Catalyzes the depolymerization of alginate by cleaving the beta-1,4 glycosidic bond between two adjacent sugar residues via a beta-elimination mechanism. May serve to degrade mislocalized alginate that is trapped in the periplasmic space. The chain is Alginate lyase from Pseudomonas putida (strain ATCC 700007 / DSM 6899 / JCM 31910 / BCRC 17059 / LMG 24140 / F1).